Here is a 109-residue protein sequence, read N- to C-terminus: Class I hydrophobin SC1 (109 aa).

A signal peptide spans 1 to 22 (MRFSLAILALPVLAAATAVPRG). Cystine bridges form between Cys-27-Cys-88, Cys-34-Cys-82, Cys-35-Cys-69, and Cys-89-Cys-102.

It belongs to the fungal hydrophobin family. In terms of assembly, self-assembles to form functional amyloid fibrils called rodlets. Self-assembly into fibrillar rodlets occurs spontaneously at hydrophobic:hydrophilic interfaces and the rodlets further associate laterally to form amphipathic monolayers.

The protein resides in the secreted. It is found in the cell wall. In terms of biological role, aerial growth, conidiation, and dispersal of filamentous fungi in the environment rely upon a capability of their secreting small amphipathic proteins called hydrophobins (HPBs) with low sequence identity. Class I can self-assemble into an outermost layer of rodlet bundles on aerial cell surfaces, conferring cellular hydrophobicity that supports fungal growth, development and dispersal; whereas Class II form highly ordered films at water-air interfaces through intermolecular interactions but contribute nothing to the rodlet structure. SC1 is a dikaryon-specific class I hydrophobin that contributes to the formation of aerial hyphae and fruiting bodies. The protein is Class I hydrophobin SC1 of Schizophyllum commune (Split gill fungus).